We begin with the raw amino-acid sequence, 205 residues long: Ypt/Rab-type GTPase Rab7 (205 aa).

GTP contacts are provided by residues 17 to 23 (SGVGKTS), 33 to 40 (FSASYKAT), G66, 125 to 128 (NKID), and 157 to 159 (SAK). The Effector region motif lies at 37 to 45 (YKATIGADF). 2 S-geranylgeranyl cysteine lipidation sites follow: C203 and C205. Position 205 is a cysteine methyl ester (C205).

The protein belongs to the small GTPase superfamily. Rab family.

It localises to the cell membrane. Its activity is regulated as follows. Alternates between an inactive form bound to GDP and an active form bound to GTP. Activated by guanine nucleotide-exchange factors (GEFs), and inactivated by GTPase-activating proteins (GAPs). Functionally, ypt/Rab-type GTPases are key regulators of membrane trafficking and intracellular vesicular transport. They act as molecular switches that convert between GTP-bound and GDP-bound states, and regulate virtually all steps of membrane traffic from the formation of the transport vesicle at the donor membrane to its fusion at the target membrane. In the GDP-bound state, Ypt proteins are predominantly cytosolic, solubilized through the interaction with a GDP dissociation inhibitor (GDI). In the GTP-bound state, the proteins are membrane bound and interact with specific effector proteins that select cargo, promote vesicle movement, or verify the correct site of fusion. In Neurospora crassa (strain ATCC 24698 / 74-OR23-1A / CBS 708.71 / DSM 1257 / FGSC 987), this protein is Ypt/Rab-type GTPase Rab7 (gtp-14).